We begin with the raw amino-acid sequence, 264 residues long: NAD kinase (264 aa).

The active-site Proton acceptor is the Asp45. Residues 45–46 (DG), His50, 121–122 (NE), Arg147, Asp149, Ala184, and Gln224 each bind NAD(+).

The protein belongs to the NAD kinase family. It depends on a divalent metal cation as a cofactor.

It localises to the cytoplasm. The catalysed reaction is NAD(+) + ATP = ADP + NADP(+) + H(+). Functionally, involved in the regulation of the intracellular balance of NAD and NADP, and is a key enzyme in the biosynthesis of NADP. Catalyzes specifically the phosphorylation on 2'-hydroxyl of the adenosine moiety of NAD to yield NADP. In Lysinibacillus sphaericus (strain C3-41), this protein is NAD kinase.